Reading from the N-terminus, the 493-residue chain is Argininosuccinate lyase (493 aa).

The protein belongs to the lyase 1 family. Argininosuccinate lyase subfamily.

The protein resides in the cytoplasm. The catalysed reaction is 2-(N(omega)-L-arginino)succinate = fumarate + L-arginine. Its pathway is amino-acid biosynthesis; L-arginine biosynthesis; L-arginine from L-ornithine and carbamoyl phosphate: step 3/3. In Methanospirillum hungatei JF-1 (strain ATCC 27890 / DSM 864 / NBRC 100397 / JF-1), this protein is Argininosuccinate lyase.